The chain runs to 550 residues: Cochlin (550 aa).

Residues 1-15 (MPAAWMPVLRLGAYA) form the signal peptide. An LCCL domain is found at 28–121 (VPIAITCFTR…QTLARWSASF (94 aa)). Intrachain disulfides connect cysteine 34/cysteine 50 and cysteine 54/cysteine 74. N-linked (GlcNAc...) asparagine glycosylation occurs at asparagine 100. Residues 126–139 (GKSSTQEATGQAVS) show a composition bias toward polar residues. Positions 126–158 (GKSSTQEATGQAVSTARPPTGKRLKKTPEKKTG) are disordered. 2 VWFA domains span residues 165–350 (DIAF…VQKL) and 367–537 (NIAF…VSDI).

Monomer. May form homodimer. Interacts with type II collagen. Interacts with ANXA2. Interacts with SLC44A2. Post-translationally, N-glycosylated.

The protein resides in the secreted. The protein localises to the extracellular space. Its subcellular location is the extracellular matrix. Functionally, plays a role in the control of cell shape and motility in the trabecular meshwork. The protein is Cochlin (COCH) of Cavia porcellus (Guinea pig).